Here is a 72-residue protein sequence, read N- to C-terminus: MSKEEVLEFSGIVTELLPNAMFRVKLENDHEIIAHTAGRMRKNRIRVLAGDKIMVEMTPYDLTKGRIIYRYK.

One can recognise an S1-like domain in the interval 1–72 (MSKEEVLEFS…TKGRIIYRYK (72 aa)).

This sequence belongs to the IF-1 family. Component of the 30S ribosomal translation pre-initiation complex which assembles on the 30S ribosome in the order IF-2 and IF-3, IF-1 and N-formylmethionyl-tRNA(fMet); mRNA recruitment can occur at any time during PIC assembly.

The protein resides in the cytoplasm. Its function is as follows. One of the essential components for the initiation of protein synthesis. Stabilizes the binding of IF-2 and IF-3 on the 30S subunit to which N-formylmethionyl-tRNA(fMet) subsequently binds. Helps modulate mRNA selection, yielding the 30S pre-initiation complex (PIC). Upon addition of the 50S ribosomal subunit IF-1, IF-2 and IF-3 are released leaving the mature 70S translation initiation complex. In Bartonella henselae (strain ATCC 49882 / DSM 28221 / CCUG 30454 / Houston 1) (Rochalimaea henselae), this protein is Translation initiation factor IF-1.